The following is a 306-amino-acid chain: uncharacterized protein (306 aa).

The Cytoplasmic segment spans residues 1-6; that stretch reads MRFRQL. A helical transmembrane segment spans residues 7 to 27; sequence LPLFGALFALYIIWGSTYFVI. Residues 18–141 enclose the EamA 1 domain; the sequence is IIWGSTYFVI…GLAGIIMLNS (124 aa). Over 28–36 the chain is Periplasmic; that stretch reads RIGVESWPP. The chain crosses the membrane as a helical span at residues 37–57; the sequence is LMMAGVRFLAAGILLLAFLLL. Topologically, residues 58-67 are cytoplasmic; it reads RGHKLPPLRP. The helical transmembrane segment at 68 to 88 threads the bilayer; that stretch reads LLNAALIGLLLLAVGNGMVTV. Residues 89–93 are Periplasmic-facing; that stretch reads AEHQN. Residues 94–114 form a helical membrane-spanning segment; it reads VPSGIAAVVVATVPLFTLCFS. Residues 115–125 are Cytoplasmic-facing; that stretch reads RLFGIKTRKLE. Residues 126 to 146 form a helical membrane-spanning segment; that stretch reads WVGIAIGLAGIIMLNSGGNLS. Residues 147 to 148 are Periplasmic-facing; it reads GN. A helical membrane pass occupies residues 149-169; the sequence is PWGAILILIGSISWAFGSVYG. The EamA 2 domain maps to 160–285; it reads ISWAFGSVYG…IVFAVVLVTL (126 aa). The Cytoplasmic portion of the chain corresponds to 170–173; the sequence is SRIT. The helical transmembrane segment at 174–194 threads the bilayer; sequence LPVGMMAGAIEMLAAGVVLMI. The Periplasmic segment spans residues 195 to 206; sequence ASMIAGEKLTAL. A helical membrane pass occupies residues 207–227; that stretch reads PSLSGFLAVGYLALFGSIIAI. Residues 228-239 are Cytoplasmic-facing; the sequence is NAYMYLIRNVSP. A helical transmembrane segment spans residues 240 to 260; the sequence is ALATSYAYVNPVVAVLLGTGL. Residues 261–269 lie on the Periplasmic side of the membrane; that stretch reads GGETLSKIE. A helical membrane pass occupies residues 270–290; the sequence is WLALGVIVFAVVLVTLGKYLF. The Cytoplasmic segment spans residues 291–306; sequence PAKPVVAPVIQDASSE.

This sequence belongs to the EamA transporter family.

Its subcellular location is the cell inner membrane. This is an uncharacterized protein from Escherichia coli O157:H7.